A 193-amino-acid chain; its full sequence is Probable gluconokinase (193 aa).

21–28 (GPAGSGKT) serves as a coordination point for ATP.

It belongs to the gluconokinase GntK/GntV family.

It carries out the reaction D-gluconate + ATP = 6-phospho-D-gluconate + ADP + H(+). It functions in the pathway carbohydrate acid metabolism; D-gluconate degradation. The protein is Probable gluconokinase of Schizosaccharomyces pombe (strain 972 / ATCC 24843) (Fission yeast).